A 192-amino-acid chain; its full sequence is Phosphoheptose isomerase (192 aa).

Positions 37 to 192 (LADSFKAGGK…IQLIEKEMVK (156 aa)) constitute an SIS domain. Substrate is bound at residue 52–54 (NGG). Zn(2+) is bound by residues His61 and Glu65. Substrate is bound by residues Glu65, 93-94 (ND), 119-121 (STS), Ser124, and Gln172. Positions 172 and 180 each coordinate Zn(2+).

This sequence belongs to the SIS family. GmhA subfamily. Homotetramer. It depends on Zn(2+) as a cofactor.

It localises to the cytoplasm. It carries out the reaction 2 D-sedoheptulose 7-phosphate = D-glycero-alpha-D-manno-heptose 7-phosphate + D-glycero-beta-D-manno-heptose 7-phosphate. The protein operates within carbohydrate biosynthesis; D-glycero-D-manno-heptose 7-phosphate biosynthesis; D-glycero-alpha-D-manno-heptose 7-phosphate and D-glycero-beta-D-manno-heptose 7-phosphate from sedoheptulose 7-phosphate: step 1/1. Its function is as follows. Catalyzes the isomerization of sedoheptulose 7-phosphate in D-glycero-D-manno-heptose 7-phosphate. The polypeptide is Phosphoheptose isomerase (Shigella dysenteriae serotype 1 (strain Sd197)).